Reading from the N-terminus, the 105-residue chain is Large ribosomal subunit protein uL24 (105 aa).

Belongs to the universal ribosomal protein uL24 family. In terms of assembly, part of the 50S ribosomal subunit.

Functionally, one of two assembly initiator proteins, it binds directly to the 5'-end of the 23S rRNA, where it nucleates assembly of the 50S subunit. In terms of biological role, one of the proteins that surrounds the polypeptide exit tunnel on the outside of the subunit. This is Large ribosomal subunit protein uL24 from Leptothrix cholodnii (strain ATCC 51168 / LMG 8142 / SP-6) (Leptothrix discophora (strain SP-6)).